A 71-amino-acid chain; its full sequence is MKEKIHPEMKLVTVKCACGAEHKFYTTLENVRIDVCSNCHPLYKGMSGASLVIDSEGRIEKFRRKYKDQQY.

Zn(2+) is bound by residues cysteine 16, cysteine 18, cysteine 36, and cysteine 39.

It belongs to the bacterial ribosomal protein bL31 family. Type A subfamily. Part of the 50S ribosomal subunit. The cofactor is Zn(2+).

Functionally, binds the 23S rRNA. The chain is Large ribosomal subunit protein bL31 from Pseudothermotoga lettingae (strain ATCC BAA-301 / DSM 14385 / NBRC 107922 / TMO) (Thermotoga lettingae).